We begin with the raw amino-acid sequence, 181 residues long: Cytidylate kinase (181 aa).

7-15 lines the ATP pocket; sequence GPPGSGTTS.

The protein belongs to the cytidylate kinase family. Type 2 subfamily.

The protein resides in the cytoplasm. The catalysed reaction is CMP + ATP = CDP + ADP. The enzyme catalyses dCMP + ATP = dCDP + ADP. The sequence is that of Cytidylate kinase from Methanoculleus marisnigri (strain ATCC 35101 / DSM 1498 / JR1).